An 885-amino-acid polypeptide reads, in one-letter code: Glycerol-3-phosphate acyltransferase (885 aa).

Residues Met1 to Pro17 show a composition bias toward pro residues. A disordered region spans residues Met1–Ala26. The HXXXXD motif motif lies at His362–Asp367.

Belongs to the GPAT/DAPAT family.

The protein localises to the cell inner membrane. It catalyses the reaction sn-glycerol 3-phosphate + an acyl-CoA = a 1-acyl-sn-glycero-3-phosphate + CoA. The protein operates within phospholipid metabolism; CDP-diacylglycerol biosynthesis; CDP-diacylglycerol from sn-glycerol 3-phosphate: step 1/3. The sequence is that of Glycerol-3-phosphate acyltransferase from Xanthomonas axonopodis pv. citri (strain 306).